Consider the following 473-residue polypeptide: ATP synthase subunit beta (473 aa).

158–165 (GGAGVGKT) contributes to the ATP binding site.

The protein belongs to the ATPase alpha/beta chains family. F-type ATPases have 2 components, CF(1) - the catalytic core - and CF(0) - the membrane proton channel. CF(1) has five subunits: alpha(3), beta(3), gamma(1), delta(1), epsilon(1). CF(0) has three main subunits: a(1), b(2) and c(9-12). The alpha and beta chains form an alternating ring which encloses part of the gamma chain. CF(1) is attached to CF(0) by a central stalk formed by the gamma and epsilon chains, while a peripheral stalk is formed by the delta and b chains.

The protein localises to the cell membrane. The catalysed reaction is ATP + H2O + 4 H(+)(in) = ADP + phosphate + 5 H(+)(out). Produces ATP from ADP in the presence of a proton gradient across the membrane. The catalytic sites are hosted primarily by the beta subunits. This chain is ATP synthase subunit beta, found in Geobacillus sp. (strain WCH70).